Reading from the N-terminus, the 320-residue chain is 1-aminocyclopropane-1-carboxylate oxidase 3 (320 aa).

A Fe2OG dioxygenase domain is found at 153 to 253 (PNFGTKVSNY…RMSLASFYNP (101 aa)). Residues His177, Asp179, and His234 each coordinate Fe cation.

The protein belongs to the iron/ascorbate-dependent oxidoreductase family. The cofactor is Fe cation.

It catalyses the reaction 1-aminocyclopropane-1-carboxylate + L-ascorbate + O2 = ethene + L-dehydroascorbate + hydrogen cyanide + CO2 + 2 H2O. The protein operates within alkene biosynthesis; ethylene biosynthesis via S-adenosyl-L-methionine; ethylene from S-adenosyl-L-methionine: step 2/2. This Petunia hybrida (Petunia) protein is 1-aminocyclopropane-1-carboxylate oxidase 3 (ACO3).